The chain runs to 390 residues: Tuftelin (390 aa).

Coiled-coil stretches lie at residues 88–126 (DKMI…KLDR) and 162–351 (DTHI…IEKQ). Ser171 is modified (phosphoserine).

It belongs to the tuftelin family. Interacts with TFIP11. In terms of tissue distribution, present in the extracellular enamel and is mainly associated with the crystal component.

Its subcellular location is the secreted. Involved in the structural organization of the epidermis. Involved in the mineralization and structural organization of enamel. The sequence is that of Tuftelin (TUFT1) from Bos taurus (Bovine).